A 350-amino-acid polypeptide reads, in one-letter code: tRNA uridine(34) hydroxylase (350 aa).

The 95-residue stretch at 146–240 folds into the Rhodanese domain; that stretch reads DDPDAVFIDM…YARRAREQGL (95 aa). Cys200 acts as the Cysteine persulfide intermediate in catalysis. Residues 319 to 328 show a composition bias toward basic and acidic residues; sequence RRRRAGRENG. Residues 319 to 350 are disordered; that stretch reads RRRRAGRENGNKIFNKSRGRLNSKLSIPDPAE.

It belongs to the TrhO family.

It catalyses the reaction uridine(34) in tRNA + AH2 + O2 = 5-hydroxyuridine(34) in tRNA + A + H2O. Its function is as follows. Catalyzes oxygen-dependent 5-hydroxyuridine (ho5U) modification at position 34 in tRNAs. The polypeptide is tRNA uridine(34) hydroxylase (Salmonella typhi).